The sequence spans 577 residues: External alternative NAD(P)H-ubiquinone oxidoreductase B1, mitochondrial (577 aa).

A mitochondrion-targeting transit peptide spans 1–35; it reads MRGFTYLSKVLHSHSSYSKLLVLCSVSTGGLLVYA. An FAD-binding site is contributed by 57 to 87; sequence RVVVLGTGWGGTSFLKDVDISSYDVQVVSPR. 221-257 contacts NAD(+); that stretch reads LHFVIVGGGPTGVEFAAELHDYVYEDLVKIYPSVKDF. The 36-residue stretch at 378–413 folds into the EF-hand domain; sequence KVMEDISAIFKAADKDDSGTLSIEEFRDVLEDIIIR. Ca(2+) contacts are provided by D391, D393, S395, T397, and E402. Residues 568 to 577 carry the Microbody targeting signal motif; it reads YIFGRDSSRI.

Belongs to the NADH dehydrogenase family. The cofactor is FAD.

It is found in the mitochondrion inner membrane. It localises to the peroxisome. The catalysed reaction is a quinone + NADH + H(+) = a quinol + NAD(+). It catalyses the reaction a ubiquinone + NADH + H(+) = a ubiquinol + NAD(+). Its activity is regulated as follows. Activity is calcium-dependent with a more pronounced effect at higher pH. Alternative NADH-ubiquinone oxidoreductase which catalyzes the oxidation of mitochondrial NADH does not translocate protons across the inner mitochondrial membrane. Calcium-dependent NAD(P)H dehydrogenase. Binds calcium ions. The sequence is that of External alternative NAD(P)H-ubiquinone oxidoreductase B1, mitochondrial (NDB1) from Solanum tuberosum (Potato).